Reading from the N-terminus, the 392-residue chain is Glutamyl-tRNA reductase (392 aa).

Substrate-binding positions include 38 to 41 (TCNR), serine 86, 91 to 93 (EDQ), and glutamine 97. Cysteine 39 acts as the Nucleophile in catalysis. 165-170 (GAGEMA) contacts NADP(+).

It belongs to the glutamyl-tRNA reductase family. As to quaternary structure, homodimer.

The enzyme catalyses (S)-4-amino-5-oxopentanoate + tRNA(Glu) + NADP(+) = L-glutamyl-tRNA(Glu) + NADPH + H(+). It functions in the pathway porphyrin-containing compound metabolism; protoporphyrin-IX biosynthesis; 5-aminolevulinate from L-glutamyl-tRNA(Glu): step 1/2. In terms of biological role, catalyzes the NADPH-dependent reduction of glutamyl-tRNA(Glu) to glutamate 1-semialdehyde (GSA). The sequence is that of Glutamyl-tRNA reductase from Methanocaldococcus jannaschii (strain ATCC 43067 / DSM 2661 / JAL-1 / JCM 10045 / NBRC 100440) (Methanococcus jannaschii).